The following is a 156-amino-acid chain: Large ribosomal subunit protein uL15 (156 aa).

The tract at residues 25 to 49 (RGIGCGKGKTSGRGHKGQKARSGTS) is disordered. The span at 34–43 (TSGRGHKGQK) shows a compositional bias: basic residues.

Belongs to the universal ribosomal protein uL15 family. In terms of assembly, part of the 50S ribosomal subunit.

Its function is as follows. Binds to the 23S rRNA. This is Large ribosomal subunit protein uL15 from Wolbachia sp. subsp. Brugia malayi (strain TRS).